The following is a 591-amino-acid chain: Pyruvate kinase 2 (591 aa).

Arg38 provides a ligand contact to substrate. K(+) is bound by residues Asn40, Ser42, and Asp72. Residue 40-43 coordinates ATP; sequence NFSH. 2 residues coordinate ATP: Arg79 and Lys164. Glu229 contributes to the Mg(2+) binding site. Positions 252, 253, and 285 each coordinate substrate. Asp253 is a Mg(2+) binding site.

It belongs to the pyruvate kinase family. The protein in the C-terminal section; belongs to the PEP-utilizing enzyme family. As to quaternary structure, homotetramer. Requires Mg(2+) as cofactor. K(+) serves as cofactor.

The enzyme catalyses pyruvate + ATP = phosphoenolpyruvate + ADP + H(+). The protein operates within carbohydrate degradation; glycolysis; pyruvate from D-glyceraldehyde 3-phosphate: step 5/5. The chain is Pyruvate kinase 2 (pyk2) from Synechocystis sp. (strain ATCC 27184 / PCC 6803 / Kazusa).